The sequence spans 334 residues: Tryptophan--tRNA ligase (334 aa).

Residues 11 to 13 and 19 to 20 contribute to the ATP site; these read QPT and GN. The 'HIGH' region signature appears at 12-20; it reads PTGKLTIGN. D135 is a binding site for L-tryptophan. ATP-binding positions include 147–149, I186, and 195–199; these read GED and KMSKS. The 'KMSKS' region motif lies at 195-199; that stretch reads KMSKS.

This sequence belongs to the class-I aminoacyl-tRNA synthetase family. Homodimer.

Its subcellular location is the cytoplasm. It carries out the reaction tRNA(Trp) + L-tryptophan + ATP = L-tryptophyl-tRNA(Trp) + AMP + diphosphate + H(+). Its function is as follows. Catalyzes the attachment of tryptophan to tRNA(Trp). The polypeptide is Tryptophan--tRNA ligase (Blochmanniella floridana).